The chain runs to 355 residues: Putative testis-specific Y-encoded-like protein 3 (355 aa).

The tract at residues 1–131 (MADKRAGTPE…GEEKQEVAAE (131 aa)) is disordered. Residues 93 to 128 (ASEKAEDANKEEGAIFKKEPAEEVEKQQEGEEKQEV) show a composition bias toward basic and acidic residues.

Belongs to the nucleosome assembly protein (NAP) family.

This chain is Putative testis-specific Y-encoded-like protein 3 (TSPY26P), found in Homo sapiens (Human).